We begin with the raw amino-acid sequence, 346 residues long: Ketol-acid reductoisomerase (NADP(+)) (346 aa).

Positions 1 to 189 (MQVYYDRDAD…GGGRSGIIET (189 aa)) constitute a KARI N-terminal Rossmann domain. NADP(+)-binding positions include 24–27 (YGSQ), Arg-48, Ser-51, Thr-53, and 83–86 (DEHQ). Residue His-108 is part of the active site. Residue Gly-134 coordinates NADP(+). One can recognise a KARI C-terminal knotted domain in the interval 190-335 (TFKEECETDL…EKLRAMMPWI (146 aa)). Mg(2+) is bound by residues Asp-198, Glu-202, Glu-234, and Glu-238. Ser-259 lines the substrate pocket.

The protein belongs to the ketol-acid reductoisomerase family. Mg(2+) serves as cofactor.

It carries out the reaction (2R)-2,3-dihydroxy-3-methylbutanoate + NADP(+) = (2S)-2-acetolactate + NADPH + H(+). The enzyme catalyses (2R,3R)-2,3-dihydroxy-3-methylpentanoate + NADP(+) = (S)-2-ethyl-2-hydroxy-3-oxobutanoate + NADPH + H(+). It participates in amino-acid biosynthesis; L-isoleucine biosynthesis; L-isoleucine from 2-oxobutanoate: step 2/4. Its pathway is amino-acid biosynthesis; L-valine biosynthesis; L-valine from pyruvate: step 2/4. Its function is as follows. Involved in the biosynthesis of branched-chain amino acids (BCAA). Catalyzes an alkyl-migration followed by a ketol-acid reduction of (S)-2-acetolactate (S2AL) to yield (R)-2,3-dihydroxy-isovalerate. In the isomerase reaction, S2AL is rearranged via a Mg-dependent methyl migration to produce 3-hydroxy-3-methyl-2-ketobutyrate (HMKB). In the reductase reaction, this 2-ketoacid undergoes a metal-dependent reduction by NADPH to yield (R)-2,3-dihydroxy-isovalerate. This chain is Ketol-acid reductoisomerase (NADP(+)), found in Sphingopyxis alaskensis (strain DSM 13593 / LMG 18877 / RB2256) (Sphingomonas alaskensis).